Reading from the N-terminus, the 486-residue chain is L-carnitine:corrinoid methyltransferase (486 aa).

It belongs to the trimethylamine methyltransferase family. The L-carnitine:THF methyl transfer system is composed of two methyltransferases, MtcB and MtqA, and the corrinoid protein MtqC.

It catalyses the reaction Co(I)-[quaternary-amine-specific corrinoid protein] + (R)-carnitine + H(+) = (3R)-4-(dimethylamino)-3-hydroxybutanoate + methyl-Co(III)-[quaternary-amine-specific corrinoid protein]. Functionally, involved in the degradation of the quaternary amine L-carnitine. Component of a corrinoid-dependent methyltransferase system that transfers a methyl group from L-carnitine to tetrahydrofolate (THF), forming methyl-THF, a key intermediate in the Wood-Ljungdahl acetogenesis pathway. MtcB catalyzes the methylation of the corrinoid protein MtqC, using L-carnitine as the methyl donor. L-carnitine demethylation generates the unusual biological product norcarnitine, which is likely degraded by other members of the gut microbiota. In vitro, can methylate free cob(I)alamin. In Eubacterium limosum, this protein is L-carnitine:corrinoid methyltransferase.